The following is a 241-amino-acid chain: Large ribosomal subunit protein bL25 (241 aa).

Positions 214 to 241 (LDAVKAGEEGSRAQQETEEASERADQGQ) are disordered.

Belongs to the bacterial ribosomal protein bL25 family. CTC subfamily. In terms of assembly, part of the 50S ribosomal subunit; part of the 5S rRNA/L5/L18/L25 subcomplex. Contacts the 5S rRNA. Binds to the 5S rRNA independently of L5 and L18.

This is one of the proteins that binds to the 5S RNA in the ribosome where it forms part of the central protuberance. The protein is Large ribosomal subunit protein bL25 of Deinococcus geothermalis (strain DSM 11300 / CIP 105573 / AG-3a).